Here is a 1319-residue protein sequence, read N- to C-terminus: Protein Jumonji (1319 aa).

The segment covering 1 to 11 has biased composition (basic residues); that stretch reads MSKERPKRNII. Disordered regions lie at residues 1-23, 50-130, 173-265, 351-382, 396-478, 499-537, and 549-599; these read MSKERPKRNIIQKKYDDNDGMPW, DGID…PSLP, DEED…NTNG, YSNNHHHNSHHATSNGHGRPQLSHSGKAQSIN, HKMT…KALN, PIQKTGPAPPPSPPAAPASPSMPQNPAIPEPARQRPKRA, and QQRA…RSRA. Over residues 61–70 the composition is skewed to polar residues; the sequence is ASLSNGQLNG. The segment covering 74–88 has biased composition (basic and acidic residues); sequence GHKEDGSRSQRKDGG. The short motif at 96–102 is the Nuclear localization signal element; sequence PAKKRPR. A compositionally biased stretch (basic residues) spans 98 to 107; that stretch reads KKRPRLHAQR. The span at 109–121 shows a compositional bias: polar residues; the sequence is FAQSQPNSPSNTP. Over residues 173 to 185 the composition is skewed to acidic residues; that stretch reads DEEDLEDEDEIEE. A compositionally biased stretch (polar residues) spans 191 to 200; sequence VASTSCQSTP. A compositionally biased stretch (basic and acidic residues) spans 221 to 251; sequence KDKELTPRSKARESSVGRDRSERCDESEISH. Polar residues predominate over residues 372–382; that stretch reads LSHSGKAQSIN. Over residues 413–424 the composition is skewed to basic and acidic residues; it reads SAREEEVVDRPV. Residues 505–515 are compositionally biased toward pro residues; that stretch reads PAPPPSPPAAP. Low complexity-rich tracts occupy residues 516–525 and 554–570; these read ASPSMPQNPA and TNPTLNRTTSTTSASKS. Positions 583–598 are enriched in basic and acidic residues; the sequence is RLDRDRERERERERSR. One can recognise a JmjN domain in the interval 607 to 648; sequence VPIFKPSSREFQDPLVYLDSFREQVESCGLCRVLPPTDWRPE. An ARID domain is found at 671–779; it reads WGPNVQKLAC…FLLSYDLLSP (109 aa). A compositionally biased stretch (basic and acidic residues) spans 798-811; sequence RKRGPLEGHSDNGH. Positions 798 to 818 are disordered; it reads RKRGPLEGHSDNGHHSLALPR. Residues 944 to 948 carry the GSGFP motif motif; that stretch reads GSGFP. Residues 954 to 1118 enclose the JmjC domain; sequence PFSKHGWNLT…LGYEAAKDLK (165 aa).

The protein belongs to the JARID2 family. Associates with the PRC2 complex.

It localises to the nucleus. In terms of biological role, regulator of histone methyltransferase complexes that plays an essential role in embryonic development. Acts by modulating histone methyltransferase activity and promoting the recruitment of histone methyltransferase complexes to their target genes. Binds DNA and mediates the recruitment of the PRC2 complex to target genes in embryonic stem cells. Does not have histone demethylase activity but regulates activity of various histone methyltransferase complexes. In embryonic stem cells, it associates with the PRC2 complex and inhibits trimethylation of 'Lys-27' of histone H3 (H3K27me3) by the PRC2 complex, thereby playing a key role in differentiation of embryonic stem cells and normal development. The polypeptide is Protein Jumonji (jarid2b) (Danio rerio (Zebrafish)).